Here is a 203-residue protein sequence, read N- to C-terminus: GTP cyclohydrolase 1 (203 aa).

C87, H90, and C158 together coordinate Zn(2+).

This sequence belongs to the GTP cyclohydrolase I family. In terms of assembly, homomer.

It catalyses the reaction GTP + H2O = 7,8-dihydroneopterin 3'-triphosphate + formate + H(+). It participates in cofactor biosynthesis; 7,8-dihydroneopterin triphosphate biosynthesis; 7,8-dihydroneopterin triphosphate from GTP: step 1/1. This is GTP cyclohydrolase 1 from Xylella fastidiosa (strain M23).